A 147-amino-acid chain; its full sequence is Ribonuclease 4 (147 aa).

The signal sequence occupies residues 1–28 (MDIQRTQSLLLLLLLTLLGLGLVQPSYG). Gln29 is subject to Pyrrolidone carboxylic acid. DUMP-binding residues include Arg35, His40, Lys68, Asn71, and Thr72. His40 functions as the Proton acceptor in the catalytic mechanism. 4 disulfides stabilise this stretch: Cys53–Cys109, Cys67–Cys120, Cys85–Cys135, and Cys92–Cys99. His144 (proton donor) is an active-site residue. DUMP is bound at residue Phe145.

Belongs to the pancreatic ribonuclease family.

It localises to the secreted. Functionally, cleaves preferentially after uridine bases. Has antimicrobial activity against uropathogenic E.coli (UPEC). Probably contributes to urinary tract sterility. This Rattus norvegicus (Rat) protein is Ribonuclease 4 (Rnase4).